A 459-amino-acid polypeptide reads, in one-letter code: Glycerol-3-phosphate acyltransferase, chloroplastic (459 aa).

The transit peptide at 1–90 directs the protein to the chloroplast; it reads MTLTFSSSAA…FNEAAGETPS (90 aa). Positions 229–234 match the HXXXXD motif motif; sequence HQSEAD.

Belongs to the GPAT/DAPAT family.

It is found in the plastid. It localises to the chloroplast stroma. It catalyses the reaction sn-glycerol 3-phosphate + an acyl-CoA = a 1-acyl-sn-glycero-3-phosphate + CoA. It functions in the pathway phospholipid metabolism; CDP-diacylglycerol biosynthesis; CDP-diacylglycerol from sn-glycerol 3-phosphate: step 1/3. Functionally, esterifies acyl-group from acyl-ACP to the sn-1 position of glycerol-3-phosphate. The enzyme from chilling-resistant plants discriminates against non-fluid palmitic acid and selects oleic acid whereas the enzyme from sensitive plants accepts both fatty acids. This is an oleate-selective acyltransferase. In Arabidopsis thaliana (Mouse-ear cress), this protein is Glycerol-3-phosphate acyltransferase, chloroplastic (ATS1).